The following is a 277-amino-acid chain: Ribonuclease HII (277 aa).

A disordered region spans residues Met1–Ala32. A compositionally biased stretch (low complexity) spans Lys20–Ala32. The 189-residue stretch at Trp64–Pro252 folds into the RNase H type-2 domain. Asp70, Glu71, and Asp161 together coordinate a divalent metal cation.

It belongs to the RNase HII family. It depends on Mn(2+) as a cofactor. Requires Mg(2+) as cofactor.

It localises to the cytoplasm. The enzyme catalyses Endonucleolytic cleavage to 5'-phosphomonoester.. Its function is as follows. Endonuclease that specifically degrades the RNA of RNA-DNA hybrids. The polypeptide is Ribonuclease HII (Bradyrhizobium sp. (strain ORS 278)).